A 445-amino-acid chain; its full sequence is 3-phosphoshikimate 1-carboxyvinyltransferase (445 aa).

Positions 1 to 25 (MSGHGPAQPMTARRSGPLKGRAEIP) are disordered. 3-phosphoshikimate contacts are provided by K28, S29, and R33. K28 serves as a coordination point for phosphoenolpyruvate. 2 residues coordinate phosphoenolpyruvate: G101 and R129. Positions 174, 176, 326, and 353 each coordinate 3-phosphoshikimate. Q176 lines the phosphoenolpyruvate pocket. D326 (proton acceptor) is an active-site residue. Phosphoenolpyruvate is bound by residues R357 and R400.

It belongs to the EPSP synthase family. As to quaternary structure, monomer.

It localises to the cytoplasm. It carries out the reaction 3-phosphoshikimate + phosphoenolpyruvate = 5-O-(1-carboxyvinyl)-3-phosphoshikimate + phosphate. It participates in metabolic intermediate biosynthesis; chorismate biosynthesis; chorismate from D-erythrose 4-phosphate and phosphoenolpyruvate: step 6/7. Catalyzes the transfer of the enolpyruvyl moiety of phosphoenolpyruvate (PEP) to the 5-hydroxyl of shikimate-3-phosphate (S3P) to produce enolpyruvyl shikimate-3-phosphate and inorganic phosphate. In Cereibacter sphaeroides (strain ATCC 17029 / ATH 2.4.9) (Rhodobacter sphaeroides), this protein is 3-phosphoshikimate 1-carboxyvinyltransferase.